The sequence spans 150 residues: Transcriptional repressor NrdR (150 aa).

Residues 3 to 34 fold into a zinc finger; sequence CPFCAHPDSKVVDSRPDKGGAAIRRRRECESC. The ATP-cone domain maps to 49-139; that stretch reads PLVLKKDGRR…VYRSFKDVNE (91 aa).

The protein belongs to the NrdR family. Zn(2+) is required as a cofactor.

Negatively regulates transcription of bacterial ribonucleotide reductase nrd genes and operons by binding to NrdR-boxes. The polypeptide is Transcriptional repressor NrdR (Geobacter metallireducens (strain ATCC 53774 / DSM 7210 / GS-15)).